We begin with the raw amino-acid sequence, 146 residues long: VEWSSNERSTITSLWGKINNAEIGQVALARVLIVYPWTQRYFGQFGDLSSIAAISGNPKVAAHGKVVLDGVEKAVKNLDSIKATYTKLSQLHSDTLNVDPDNFKLLGDCLTIVLSAKFGAEFTPAVQAVWQKFLSCVISALSRQYF.

The Globin domain maps to 2–146; sequence EWSSNERSTI…VISALSRQYF (145 aa). Residues His-63 and His-92 each coordinate heme b.

This sequence belongs to the globin family. In terms of assembly, heterotetramer of two alpha chains and two beta chains. Red blood cells.

Its function is as follows. Involved in oxygen transport from gills to the various peripheral tissues. The polypeptide is Hemoglobin subunit beta-1 (hbb1) (Muraena helena (Mediterranean moray)).